The chain runs to 307 residues: Ninja-family protein 5 (307 aa).

Disordered regions lie at residues 1–159 (MASR…EHTV) and 173–208 (TAGSPTPSRPQQGPADRRAAEATGPDGAACHDEPQP). Gly residues predominate over residues 8 to 30 (GGFGRDGGQAPVGGAGAAPGPGG). Composition is skewed to polar residues over residues 63 to 83 (QRSSSVASICSLPAATTGTSC) and 173 to 183 (TAGSPTPSRPQ).

The protein belongs to the Ninja family.

The protein localises to the nucleus. This chain is Ninja-family protein 5, found in Zea mays (Maize).